The primary structure comprises 34 residues: Cytochrome b6-f complex subunit 5 (34 aa).

Residues 5 to 25 (LLSGIVLGLVPVTLAGLFVTA) traverse the membrane as a helical segment.

The protein belongs to the PetG family. As to quaternary structure, the 4 large subunits of the cytochrome b6-f complex are cytochrome b6, subunit IV (17 kDa polypeptide, PetD), cytochrome f and the Rieske protein, while the 4 small subunits are PetG, PetL, PetM and PetN. The complex functions as a dimer.

Its subcellular location is the plastid. The protein resides in the chloroplast thylakoid membrane. Functionally, component of the cytochrome b6-f complex, which mediates electron transfer between photosystem II (PSII) and photosystem I (PSI), cyclic electron flow around PSI, and state transitions. PetG is required for either the stability or assembly of the cytochrome b6-f complex. In Oltmannsiellopsis viridis (Marine flagellate), this protein is Cytochrome b6-f complex subunit 5.